The sequence spans 739 residues: Elongation factor 2 (739 aa).

In terms of domain architecture, tr-type G spans 19-261; that stretch reads RNIRNIGIIA…MVALHVPDPI (243 aa). GTP-binding positions include 28–35, 94–98, and 148–151; these read AHVDHGKT, DTPGH, and NKID. His603 bears the Diphthamide mark.

The protein belongs to the TRAFAC class translation factor GTPase superfamily. Classic translation factor GTPase family. EF-G/EF-2 subfamily.

Its subcellular location is the cytoplasm. Catalyzes the GTP-dependent ribosomal translocation step during translation elongation. During this step, the ribosome changes from the pre-translocational (PRE) to the post-translocational (POST) state as the newly formed A-site-bound peptidyl-tRNA and P-site-bound deacylated tRNA move to the P and E sites, respectively. Catalyzes the coordinated movement of the two tRNA molecules, the mRNA and conformational changes in the ribosome. The chain is Elongation factor 2 from Korarchaeum cryptofilum (strain OPF8).